Consider the following 76-residue polypeptide: Exodeoxyribonuclease 7 small subunit (76 aa).

The protein belongs to the XseB family. As to quaternary structure, heterooligomer composed of large and small subunits.

It is found in the cytoplasm. It catalyses the reaction Exonucleolytic cleavage in either 5'- to 3'- or 3'- to 5'-direction to yield nucleoside 5'-phosphates.. Functionally, bidirectionally degrades single-stranded DNA into large acid-insoluble oligonucleotides, which are then degraded further into small acid-soluble oligonucleotides. This Arthrobacter sp. (strain FB24) protein is Exodeoxyribonuclease 7 small subunit.